A 162-amino-acid chain; its full sequence is ATP synthase subunit delta, mitochondrial (162 aa).

The N-terminal 24 residues, 1–24 (MFSVARTAIRGAARPAVRIARRGY), are a transit peptide targeting the mitochondrion.

In terms of assembly, F-type ATP synthases have 2 components, the catalytic core F(1) and the membrane-embedded component F(0), linked together by a central stalk and a peripheral stalk. The central stalk, also called rotor shaft, is often seen as part of F(1). The peripheral stalk is seen as part of F(0). F(0) contains the membrane channel next to the rotor. F-type ATP synthases form dimers but each monomer functions independently in ATP generation. The dimer consists of 17 different polypeptides: ATP1 (subunit alpha, 3 molecules per monomer, part of F(1)), ATP2 (subunit beta, 3 copies per monomer, part of F(1)), ATP3 (subunit gamma, part of the central stalk), ATP4 (subunit b, part of the peripheral stalk), ATP5/OSCP (subunit 5/OSCP, part of the peripheral stalk), ATP6 (subunit a, part of the peripheral stalk), ATP7 (subunit d, part of the peripheral stalk), ATP8 (subunit 8, part of the peripheral stalk), OLI1 (subunit c, part of the rotor, 10 molecules per monomer), ATP14 (subunit h, part of the peripheral stalk), ATP15 (subunit epsilon, part of the central stalk), ATP16 (subunit delta, part of the central stalk), ATP17 (subunit f, part of the peripheral stalk), ATP18 (subunit i/j, part of the peripheral stalk), ATP19 (subunit k, dimer-specific, at interface between monomers), ATP20 (subunit g, at interface between monomers), TIM11 (subunit e, at interface between monomers).

It localises to the mitochondrion inner membrane. Functionally, mitochondrial membrane ATP synthase (F(1)F(0) ATP synthase or Complex V) produces ATP from ADP in the presence of a proton gradient across the membrane which is generated by electron transport complexes of the respiratory chain. F-type ATP synthases consist of two structural domains, F(1) - containing the extramembraneous catalytic core, and F(0) - containing the membrane proton channel, linked together by a central stalk and a peripheral stalk. During catalysis, ATP synthesis in the catalytic domain of F(1) is coupled via a rotary mechanism of the central stalk subunits to proton translocation. Part of the complex F(1) domain and the central stalk which is part of the complex rotary element. Rotation of the central stalk against the surrounding alpha/ATP1(3)beta/ATP2(3) subunits leads to hydrolysis of ATP in three separate catalytic sites on the beta/ATP2 subunits. The polypeptide is ATP synthase subunit delta, mitochondrial (Yarrowia lipolytica (strain CLIB 122 / E 150) (Yeast)).